Here is a 199-residue protein sequence, read N- to C-terminus: Prostatic spermine-binding protein (199 aa).

The first 18 residues, M1–Q18, serve as a signal peptide directing secretion. The Jacalin-type lectin domain maps to N19 to N151. N-linked (GlcNAc...) asparagine glycosylation occurs at N62. The tract at residues H159–S199 is disordered. Residues Y160–K180 show a composition bias toward basic and acidic residues. Residues D181–S199 show a composition bias toward acidic residues.

It to rat SBP. As to expression, prostate.

Its function is as follows. This protein seems to be functional equivalent to rat prostatic spermine-binding protein, which is involved in polyamine binding. In Mus musculus (Mouse), this protein is Prostatic spermine-binding protein (Sbp).